The sequence spans 335 residues: UPF0353 protein MAV335 (335 aa).

The next 2 helical transmembrane spans lie at 18 to 38 (WFFL…LMQL) and 67 to 87 (LPAI…AGPT). The 198-residue stretch at 98-295 (VVMLVIDVSQ…QELKSVYATL (198 aa)) folds into the VWFA domain. Residues 309 to 329 (SVGWVRLGALVLRLAADALLI) traverse the membrane as a helical segment.

This sequence belongs to the UPF0353 family.

It is found in the cell membrane. The chain is UPF0353 protein MAV335 from Mycobacterium avium.